A 277-amino-acid polypeptide reads, in one-letter code: Lectin 1 (277 aa).

The signal sequence occupies residues 1–30 (MSFSSSNFYVILSISLTVFILLFNINKVNS). N-linked (GlcNAc...) asparagine glycosylation is present at N143. Residues E152 and D154 each coordinate Mn(2+). Ca(2+) is bound by residues D154, N158, and D161. The Mn(2+) site is built by D161 and H167. Residue N269 is glycosylated (N-linked (GlcNAc...) asparagine).

Belongs to the leguminous lectin family.

Functionally, lectin that may be involved in a cell recognition process. This Medicago truncatula (Barrel medic) protein is Lectin 1 (LEC1).